The following is a 339-amino-acid chain: UDP-N-acetylenolpyruvoylglucosamine reductase (339 aa).

One can recognise an FAD-binding PCMH-type domain in the interval 19 to 189 (VDVRAQLFAE…LRVRFALNRV (171 aa)). The active site involves Arg-166. Ser-239 serves as the catalytic Proton donor. The active site involves Glu-335.

Belongs to the MurB family. FAD is required as a cofactor.

Its subcellular location is the cytoplasm. It carries out the reaction UDP-N-acetyl-alpha-D-muramate + NADP(+) = UDP-N-acetyl-3-O-(1-carboxyvinyl)-alpha-D-glucosamine + NADPH + H(+). It participates in cell wall biogenesis; peptidoglycan biosynthesis. Its function is as follows. Cell wall formation. The chain is UDP-N-acetylenolpyruvoylglucosamine reductase from Pseudomonas fluorescens (strain Pf0-1).